We begin with the raw amino-acid sequence, 306 residues long: MTRHFLRDDDLSPTEQADILALAADLKKAPFSRRPLAGPRGVAVIFDKNSTRTRFSFDIGIAQLGGHAVVVDGLSTQLGRDETLQDTARVLSGYVDAIVWRTFGQHRLDAMAATATVPVVNALSDEFHPCQVLADLQTIAERKGSLNGLRLSYFGDGANNMAHSLMLGAVTAGVHVTVATPVGFTPDPSVLAAAKKRAEATGASVTVTVDADTAAAGADVLVTDTWTSMGQENDGLDRVKPFWPFQVNARLVGLADSEAIVLHCLPAHRGDEITNEVMDGPTSAIWDEAENRLHAQKALLVWLLER.

Carbamoyl phosphate contacts are provided by residues 50 to 53 (STRT), glutamine 77, arginine 101, and 128 to 131 (HPCQ). L-ornithine is bound by residues asparagine 160, aspartate 224, and 228–229 (SM). Residues 264-265 (CL) and arginine 292 each bind carbamoyl phosphate.

This sequence belongs to the aspartate/ornithine carbamoyltransferase superfamily. OTCase family.

It is found in the cytoplasm. The enzyme catalyses carbamoyl phosphate + L-ornithine = L-citrulline + phosphate + H(+). It participates in amino-acid biosynthesis; L-arginine biosynthesis; L-arginine from L-ornithine and carbamoyl phosphate: step 1/3. In terms of biological role, reversibly catalyzes the transfer of the carbamoyl group from carbamoyl phosphate (CP) to the N(epsilon) atom of ornithine (ORN) to produce L-citrulline. This Mycobacterium leprae (strain TN) protein is Ornithine carbamoyltransferase.